Here is a 188-residue protein sequence, read N- to C-terminus: Elongation factor P (188 aa).

It belongs to the elongation factor P family.

The protein resides in the cytoplasm. It participates in protein biosynthesis; polypeptide chain elongation. In terms of biological role, involved in peptide bond synthesis. Stimulates efficient translation and peptide-bond synthesis on native or reconstituted 70S ribosomes in vitro. Probably functions indirectly by altering the affinity of the ribosome for aminoacyl-tRNA, thus increasing their reactivity as acceptors for peptidyl transferase. The protein is Elongation factor P of Chlorobaculum parvum (strain DSM 263 / NCIMB 8327) (Chlorobium vibrioforme subsp. thiosulfatophilum).